The sequence spans 677 residues: Fidgetin-like protein 1 (677 aa).

Positions 203–216 (TSSAPSGESTTATF) are enriched in polar residues. 3 disordered regions span residues 203 to 232 (TSSAPSGESTTATFHRTPLFGNTKKEPQSF), 249 to 324 (VPSG…SFNG), and 337 to 378 (GIFG…TDDR). Residue lysine 226 forms a Glycyl lysine isopeptide (Lys-Gly) (interchain with G-Cter in SUMO2) linkage. Residues 264–280 (DSDTINMLSNPTLNKAP) are compositionally biased toward polar residues. Basic and acidic residues predominate over residues 281–292 (SKTEDSGQREDN). Lysine 341 bears the N6-acetyllysine mark. The segment covering 347-358 (SNKQDGSEQNGN) has biased composition (polar residues). Residues alanine 407 and 447–452 (GTGKTL) contribute to the ATP site.

Belongs to the AAA ATPase family. Hexamer. Interacts (via N-terminal one-half region) with RAD51; the interaction is direct. Interacts (via N-terminal one-half region) with SPIDR (via the C-terminal region); the interaction is direct. Interacts with FIRRM; may regulate homologous recombination. Mg(2+) is required as a cofactor.

The protein resides in the nucleus. Its subcellular location is the cytoplasm. It localises to the perinuclear region. The enzyme catalyses ATP + H2O = ADP + phosphate + H(+). Functionally, involved in DNA double-strand break (DBS) repair via homologous recombination (HR). Recruited at DSB sites independently of BRCA2, RAD51 and RAD51 paralogs in a H2AX-dependent manner. May regulate osteoblast proliferation and differentiation. May play a role in the control of male meiosis dynamic. The protein is Fidgetin-like protein 1 (Fignl1) of Rattus norvegicus (Rat).